A 504-amino-acid chain; its full sequence is Dolichol kinase sec59 (504 aa).

Over 1 to 55 (MYIMSKKCYDTSEKIDREQECVEVNYQHRNFESILEIFSVLFIPFLCNSGKKFLQ) the chain is Cytoplasmic. A helical transmembrane segment spans residues 56–76 (ISNASFFLPACFYLLGSSSII). Residue glutamine 77 is a topological domain, lumenal. Residues 78 to 98 (LYEPLLWLSSFPFCILYVGFG) form a helical membrane-spanning segment. Over 99–157 (ENSVLYHEMYTVCLYNALLSLTQRWKWLSIVLDGLGNSSVNLKLHETVILAFLEITQNS) the chain is Cytoplasmic. A helical membrane pass occupies residues 158 to 178 (FTFIEGILICTGLTGLCFATF). Topologically, residues 179 to 187 (SYEVSPVVS) are lumenal. A helical transmembrane segment spans residues 188–208 (VLSGVLLISLPTLILLNLCIL). The Cytoplasmic portion of the chain corresponds to 209 to 215 (KLAAKLH). The helical transmembrane segment at 216–236 (LSALFTTCLIYFFSALLVFLV) threads the bilayer. The Lumenal segment spans residues 237–263 (SRSWVAGQLGQAPEVWLFNQIFSHRNS). A helical membrane pass occupies residues 264 to 284 (LTRIKIIIWWIICLGCFIFIL). Residues 285–325 (LRSNRNNPLGKYFTTEDEVLNFRRKTYHALVVFLFLPVCCL) are Cytoplasmic-facing. A helical membrane pass occupies residues 326 to 347 (DPHFLHLSFSGVLFIFLFVEGI). The Lumenal portion of the chain corresponds to 348–373 (RILRLKPFGKMIHEFLWEYTDNRDHK). A helical transmembrane segment spans residues 374–394 (GPLIISHIYLLIGCAIPIWLS). The Cytoplasmic portion of the chain corresponds to 395-403 (NALKGPVAS). A helical transmembrane segment spans residues 404–424 (VELLVGVLCLGCGDSMASIIG). Residues 425–440 (KRFGKHRISKTNKSIE) lie on the Lumenal side of the membrane. The chain crosses the membrane as a helical span at residues 441–461 (GVFAFSISVFLVLHLTQAFHV). Position 462 (cysteine 462) is a topological domain, cytoplasmic. The chain crosses the membrane as a helical span at residues 463–483 (PSVTFWKTLFMSLCTAILEGV). Topologically, residues 484 to 504 (STENDNLILPMYMWVLYQALD) are lumenal.

It belongs to the polyprenol kinase family.

It localises to the endoplasmic reticulum membrane. It catalyses the reaction a di-trans,poly-cis-dolichol + CTP = a di-trans,poly-cis-dolichyl phosphate + CDP + H(+). It functions in the pathway protein modification; protein glycosylation. Its function is as follows. Catalyzes CTP-mediated phosphorylation of dolichol, the terminal step in de novo dolichyl monophosphate (Dol-P) biosynthesis. Dol-P is a lipid carrier essential for the synthesis of N-linked and O-linked oligosaccharides and for GPI anchors. The sequence is that of Dolichol kinase sec59 from Schizosaccharomyces pombe (strain 972 / ATCC 24843) (Fission yeast).